Here is a 412-residue protein sequence, read N- to C-terminus: Ornithine cyclodeaminase (412 aa).

10 residues coordinate NAD(+): Asn-237, Ala-238, Asp-316, Thr-348, Met-349, Leu-350, His-351, Asp-369, Asp-392, and Val-393.

Belongs to the AgrE/ArgZ ornithine cyclodeaminase family. Requires NAD(+) as cofactor.

It catalyses the reaction L-ornithine = L-proline + NH4(+). Catalyzes the conversion of ornithine to proline, with the release of ammonia. The chain is Ornithine cyclodeaminase from Methanopyrus kandleri (strain AV19 / DSM 6324 / JCM 9639 / NBRC 100938).